We begin with the raw amino-acid sequence, 400 residues long: Gap junction alpha-8 protein (400 aa).

The stretch at 2-12 (GDWSFLGNILE) is an intramembrane region. Residues 13–21 (QVNEQSTVI) lie on the Cytoplasmic side of the membrane. A helical membrane pass occupies residues 22–42 (GRVWLTVLFIFRILILGTAAE). The Extracellular segment spans residues 43 to 71 (LVWGDEQSDFVCNTQQPGCENVCYDEAFP). Intrachain disulfides connect cysteine 54/cysteine 196, cysteine 61/cysteine 190, and cysteine 65/cysteine 185. A helical transmembrane segment spans residues 72–92 (ISHIRLWVLQIIFVSTPSLVY). Residues 93–156 (FGHAVHHVRM…GTLLRTYILH (64 aa)) are Cytoplasmic-facing. Residues 104 to 118 (EKRKEREEAERRQQA) show a composition bias toward basic and acidic residues. Residues 104-139 (EKRKEREEAERRQQAEVDEEKLPLAPNQNKGNNPDG) form a disordered region. Residues 129–138 (PNQNKGNNPD) are compositionally biased toward polar residues. A helical transmembrane segment spans residues 157–177 (IIFKTLFEVGFIVGQYFLYGF). At 178–205 (RILPLYRCGRWPCPNLVDCFVSRPTEKT) the chain is on the extracellular side. A helical transmembrane segment spans residues 206 to 226 (IFIMFMLVVAAVSLFLNLVEI). Residues 227 to 400 (SHLILKRIRR…SRARSDDLTV (174 aa)) are Cytoplasmic-facing. The disordered stretch occupies residues 323 to 400 (YAQAKEPEEE…SRARSDDLTV (78 aa)). A compositionally biased stretch (basic and acidic residues) spans 327–336 (KEPEEEKVKA). Over residues 337–346 (EEEEEQEEEQ) the composition is skewed to acidic residues. Serine 364 bears the Phosphoserine; by CK2 mark. Residues 381 to 392 (RSLSRLSKASSR) show a composition bias toward low complexity.

The protein belongs to the connexin family. Alpha-type (group II) subfamily. As to quaternary structure, a hemichannel or connexon is composed of a hexamer of connexins. A functional gap junction is formed by the apposition of two hemichannels. Forms heteromeric channels with GJA3. During early stages of lens development, interacts with the C-terminus of MIP. Proteolytically cleaved by caspase-3 during lens development. Post-translationally, phosphorylated on Ser-364; which inhibits cleavage by caspase-3.

It localises to the cell membrane. It is found in the cell junction. The protein localises to the gap junction. Structural component of eye lens gap junctions. Gap junctions are dodecameric channels that connect the cytoplasm of adjoining cells. They are formed by the docking of two hexameric hemichannels, one from each cell membrane. Small molecules and ions diffuse from one cell to a neighboring cell via the central pore. This is Gap junction alpha-8 protein (GJA8) from Gallus gallus (Chicken).